Here is a 327-residue protein sequence, read N- to C-terminus: Petrobactin synthase (327 aa).

The catalysed reaction is N(8)-citryl-spermidine + 3,4-dihydroxybenzoyl-[aryl-carrier protein] = N(1)-(3,4-dihydroxybenzoyl)-N(8)-citryl-spermidine + holo-[aryl-carrier protein] + H(+). It catalyses the reaction N(8),N'(8)-citryl-bis(spermidine) + 3,4-dihydroxybenzoyl-[aryl-carrier protein] = N(1)-(3,4-dihydroxybenzoyl)-N(8),N'(8)-citryl-bis(spermidine) + holo-[aryl-carrier protein] + H(+). It carries out the reaction N(1)-(3,4-dihydroxybenzoyl)-N(8),N'(8)-citryl-bis(spermidine) + 3,4-dihydroxybenzoyl-[aryl-carrier protein] = petrobactin + holo-[aryl-carrier protein] + H(+). Its pathway is siderophore biosynthesis; petrobactin biosynthesis. Functionally, involved in the biosynthesis of petrobactin, a catecholate siderophore that functions in both iron acquisition and virulence. Transfers the activated 3,4-dihydroxybenzoate (3,4-DHBA) moiety from 3,4-DHBA-loaded AsbD to different receipient molecules, including N-citryl-spermidine, N8,N'8-citryl-bis(spermidine) and N1-(3,4-dihydroxybenzoyl)-N8,N'8-citryl-bis(spermidine). Also catalyzes the transfer of the activated 3,4-DHBA moiety from 3,4-DHBA-loaded AsbD to spermidine to generate DHB-spermidine (DHB-SP). The sequence is that of Petrobactin synthase from Bacillus anthracis.